The sequence spans 500 residues: Envelop protein OPG153 (500 aa).

C43 and C342 are joined by a disulfide.

It belongs to the orthopoxvirus OPG153 protein family. In terms of assembly, interacts with proteins OPG094 and OPG143. Interacts with OPG154. Interacts with OPG152. Interacts with host laminin.

The protein resides in the virion membrane. Functionally, envelop protein that mediates acid-dependent endocytosis into host cells. Plays an important role in endocytic entry of the virus by acting as an acid-sensitive membrane fusion suppressor. Low pH in host endosomes triggers conformational changes to allow de-repression of viral fusion complex activity and membrane fusion within vesicles. Also plays a role in bridging the mature virion with structural protein OPG152. The chain is Envelop protein OPG153 (OPG153) from Vaccinia virus (strain Western Reserve) (VACV).